Consider the following 125-residue polypeptide: Large ribosomal subunit protein bL12 (125 aa).

Residues 96–125 (PAPVKEGATKDEAEEIKKKIEEAGGTAELK) form a disordered region. A compositionally biased stretch (basic and acidic residues) spans 102-117 (GATKDEAEEIKKKIEE).

The protein belongs to the bacterial ribosomal protein bL12 family. Homodimer. Part of the ribosomal stalk of the 50S ribosomal subunit. Forms a multimeric L10(L12)X complex, where L10 forms an elongated spine to which 2 to 4 L12 dimers bind in a sequential fashion. Binds GTP-bound translation factors.

In terms of biological role, forms part of the ribosomal stalk which helps the ribosome interact with GTP-bound translation factors. Is thus essential for accurate translation. This is Large ribosomal subunit protein bL12 from Alcanivorax borkumensis (strain ATCC 700651 / DSM 11573 / NCIMB 13689 / SK2).